A 109-amino-acid chain; its full sequence is Ribonuclease (109 aa).

The active-site Proton acceptor is the Glu72. His101 (proton donor) is an active-site residue.

This sequence belongs to the ribonuclease N1/T1 family.

It localises to the secreted. Its function is as follows. Hydrolyzes phosphodiester bonds in RNA, poly- and oligoribonucleotides resulting in 3'-nucleoside monophosphates via 2',3'-cyclophosphate intermediates. This is Ribonuclease from Heyndrickxia coagulans (Weizmannia coagulans).